The sequence spans 172 residues: Inorganic pyrophosphatase (172 aa).

Substrate-binding residues include K28, R42, and Y54. Mg(2+) contacts are provided by D64, D69, and D101. Residue Y140 participates in substrate binding.

The protein belongs to the PPase family. In terms of assembly, homohexamer. It depends on Mg(2+) as a cofactor.

Its subcellular location is the cytoplasm. It catalyses the reaction diphosphate + H2O = 2 phosphate + H(+). Functionally, catalyzes the hydrolysis of inorganic pyrophosphate (PPi) forming two phosphate ions. This is Inorganic pyrophosphatase from Campylobacter jejuni subsp. jejuni serotype O:2 (strain ATCC 700819 / NCTC 11168).